A 458-amino-acid chain; its full sequence is Argininosuccinate lyase (458 aa).

Belongs to the lyase 1 family. Argininosuccinate lyase subfamily.

Its subcellular location is the cytoplasm. It catalyses the reaction 2-(N(omega)-L-arginino)succinate = fumarate + L-arginine. It functions in the pathway amino-acid biosynthesis; L-arginine biosynthesis; L-arginine from L-ornithine and carbamoyl phosphate: step 3/3. The chain is Argininosuccinate lyase from Neisseria meningitidis serogroup C / serotype 2a (strain ATCC 700532 / DSM 15464 / FAM18).